We begin with the raw amino-acid sequence, 360 residues long: MNKIISVWKKMNLIRKIGIGVVLGVLLGLIAPKITVIALFGSLFVGALKAIAPLLVLTLVAHALSQAPAGQKSNMRTVICLYLFGTFAAAFIAVGASYLFPIKLVLSTTTTTDITPPQGIAEVFQDLLLKVVDNPINALATANYIGVLTWAAVFGLAFRHASKTTKDLLQSTAEVISKVVGWIIGLAPFGIMGLVFDTIANNGLTALKDYGLLLLLLVGSMIFVALVVNPLIAFLVMKKNPYPLVFECLRVSGVTAFFTRSSAANIPVNMQLCKRLGVDPDTYSVSIPLGATINMAGAAITINILTMAAVHTLGISVDFSSALLLSVVASLSAAGASGVAGGSLLLIPVACSLFVVPYVV.

The next 9 membrane-spanning stretches (helical) occupy residues I17–I37, F40–V60, V78–Y98, A138–F158, V179–I199, L212–I232, M295–I315, S316–A336, and V339–V359.

It belongs to the dicarboxylate/amino acid:cation symporter (DAACS) (TC 2.A.23) family.

Its subcellular location is the cell membrane. It carries out the reaction L-serine(in) + Na(+)(in) = L-serine(out) + Na(+)(out). The enzyme catalyses L-threonine(in) + Na(+)(in) = L-threonine(out) + Na(+)(out). Functionally, involved in the import of serine and threonine into the cell, with the concomitant import of sodium (symport system). In Streptococcus suis (strain 05ZYH33), this protein is Serine/threonine transporter SstT.